The following is a 142-amino-acid chain: Hemoglobin subunit alpha-C (142 aa).

At Ala-2 the chain carries N-acetylalanine. In terms of domain architecture, Globin spans 2-142 (ALNCDDKAHI…VSGLLTSKYR (141 aa)). His-59 contributes to the O2 binding site. His-88 is a heme b binding site.

The protein belongs to the globin family. In terms of assembly, heterotetramer of either two alpha-B chains or two alpha-C chains and two beta chains. The two major hemoglobins, B and C, associate upon deoxygenation to form a trimer of tetramers, BC2, that has a much lower affinity for oxygen than either component alone. In terms of tissue distribution, red blood cells.

The alpha-C chain is a component of adult hemoglobin C. This Aquarana catesbeiana (American bullfrog) protein is Hemoglobin subunit alpha-C.